The following is a 262-amino-acid chain: Regulatory protein RecX (262 aa).

This sequence belongs to the RecX family.

The protein localises to the cytoplasm. Modulates RecA activity. This Photobacterium profundum (strain SS9) protein is Regulatory protein RecX.